The chain runs to 809 residues: uncharacterized protein (809 aa).

An MHYT domain is found at 19–206; sequence HDLRLVLVAS…FTGMSAITIV (188 aa). A run of 7 helical transmembrane segments spans residues 23 to 43, 57 to 77, 92 to 112, 122 to 142, 152 to 172, 186 to 206, and 224 to 244; these read LVLVASAVCLAGCFTTFRLYS, LLLTGLVAGSSVWATHFIAMV, TLLSLMIAALFMASGFAVASA, GGVLIGLGVAAMHYMGMSAFV, ATVGMSAVLGVGGATAALLLA, GMLCLGIVMLHFTGMSAITIV, and TLAVGSITSMIILGGLGAVAI. One can recognise a PAS domain in the interval 254-317; sequence ERIRRLANAA…ADPSREDVRR (64 aa). The GGDEF domain maps to 402 to 536; the sequence is ESLAVICIDL…GRGVYRFFKR (135 aa). Residues 545 to 795 form the EAL domain; that stretch reads RRNLARDLRQ…ALTMWTTAGD (251 aa).

Its subcellular location is the cell membrane. This is an uncharacterized protein from Caulobacter vibrioides (strain ATCC 19089 / CIP 103742 / CB 15) (Caulobacter crescentus).